A 368-amino-acid polypeptide reads, in one-letter code: Glutamyl-tRNA reductase (368 aa).

Residues 43 to 46 (TCHR), serine 89, 94 to 96 (EHQ), and glutamine 100 each bind substrate. The Nucleophile role is filled by cysteine 44. 164 to 169 (GTGMMG) provides a ligand contact to NADP(+).

The protein belongs to the glutamyl-tRNA reductase family. Homodimer.

It catalyses the reaction (S)-4-amino-5-oxopentanoate + tRNA(Glu) + NADP(+) = L-glutamyl-tRNA(Glu) + NADPH + H(+). The protein operates within porphyrin-containing compound metabolism; protoporphyrin-IX biosynthesis; 5-aminolevulinate from L-glutamyl-tRNA(Glu): step 1/2. In terms of biological role, catalyzes the NADPH-dependent reduction of glutamyl-tRNA(Glu) to glutamate 1-semialdehyde (GSA). The protein is Glutamyl-tRNA reductase of Thermosipho melanesiensis (strain DSM 12029 / CIP 104789 / BI429).